Reading from the N-terminus, the 456-residue chain is Decaprenyl-diphosphate synthase (456 aa).

Isopentenyl diphosphate contacts are provided by Lys183, Arg186, and His216. Positions 223 and 227 each coordinate Mg(2+). Arg233 contacts isopentenyl diphosphate.

Belongs to the FPP/GGPP synthase family. Mg(2+) serves as cofactor.

It localises to the mitochondrion. The catalysed reaction is 7 isopentenyl diphosphate + (2E,6E)-farnesyl diphosphate = all-trans-decaprenyl diphosphate + 7 diphosphate. It functions in the pathway cofactor biosynthesis; ubiquinone biosynthesis. Functionally, supplies decaprenyl diphosphate, the precursor for the side chain of the isoprenoid quinones ubiquinone-10. The sequence is that of Decaprenyl-diphosphate synthase (coq1) from Dictyostelium discoideum (Social amoeba).